Here is a 571-residue protein sequence, read N- to C-terminus: Ferroportin (571 aa).

Over 1–23 (MTRAGDHNRQRGCCGSLADYLTS) the chain is Cytoplasmic. The chain crosses the membrane as a helical span at residues 24 to 53 (AKFLLYLGHSLSTWGDRMWHFAVSVFLVEL). The Fe cation site is built by aspartate 39 and histidine 43. At 54 to 57 (YGNS) the chain is on the extracellular side. The helical transmembrane segment at 58–84 (LLLTAVYGLVVAGSVLVLGAIIGDWVD) threads the bilayer. Residues 85–87 (KNA) lie on the Cytoplasmic side of the membrane. The chain crosses the membrane as a helical span at residues 88 to 118 (RLKVAQTSLVVQNVSVILCGIILMMVFLHKH). Topologically, residues 119-126 (ELLTMYHG) are extracellular. The helical transmembrane segment at 127–162 (WVLTSCYILIITIANIANLASTATAITIQRDWIVVV) threads the bilayer. Over 163–164 (AG) the chain is Cytoplasmic. A helical transmembrane segment spans residues 165–195 (EDRSKLANMNATIRRIDQLTNILAPMAVGQI). The Extracellular portion of the chain corresponds to 196–202 (MTFGSPV). Residues 203–229 (IGCGFISGWNLVSMCVEYVLLWKVYQK) traverse the membrane as a helical segment. The Cytoplasmic segment spans residues 230–306 (TPALAVKAGL…DGWVSYYNQP (77 aa)). A helical membrane pass occupies residues 307 to 333 (VFLAGMGLAFLYMTVLGFDCITTGYAY). Cysteine 326 is a binding site for Fe cation. The Extracellular segment spans residues 334-338 (TQGLS). A helical transmembrane segment spans residues 339-366 (GSILSILMGASAITGIMGTVAFTWLRRK). The Cytoplasmic portion of the chain corresponds to 367-368 (CG). The chain crosses the membrane as a helical span at residues 369–391 (LVRTGLISGLAQLSCLILCVISV). Topologically, residues 392–453 (FMPGSPLDLS…ETSPESVPII (62 aa)) are extracellular. An N-linked (GlcNAc...) asparagine glycan is attached at asparagine 434. A helical transmembrane segment spans residues 454–483 (SVSLLFAGVIAARIGLWSFDLTVTQLLQEN). Over 484 to 488 (VIESE) the chain is Cytoplasmic. The helical transmembrane segment at 489-513 (RGIINGVQNSMNYLLDLLHFIMVIL) threads the bilayer. A Fe cation-binding site is contributed by histidine 507. The Extracellular segment spans residues 514 to 516 (APN). The helical transmembrane segment at 517-542 (PEAFGLLVLISVSFVAMGHIMYFRFA) threads the bilayer. At 543–571 (QNTLGNKLFACGPDAKEVRKENQANTSVV) the chain is on the cytoplasmic side.

This sequence belongs to the ferroportin (FP) (TC 2.A.100) family. SLC40A subfamily. Identified in a complex with STOM. Interacts with HAMP; affinity of the peptide hormone HAMP for SLC40A1 increases by 80-fold in the presence of iron and the interaction promotes SLC40A1 ubiquitination and degradation. Part of a complex composed of SLC40A1/ferroportin, TF/transferrin and HEPH/hephaestin that transfers iron from cells to transferrin. Polyubiquitinated by RNF217; leading to proteasomal degradation. Under conditions of high systemic iron levels, both the hormone peptide hepcidin/HAMP and holo(iron bound)-transferrin/TF induce the ubiquitination, internalization and proteasomal degradation of SLC40A1 to control iron release from cells. As to expression, detected in erythrocytes (at protein level). Expressed in placenta, intestine, muscle and spleen. Highly expressed in mature red blood.

The protein resides in the cell membrane. It is found in the basolateral cell membrane. It carries out the reaction Fe(2+)(in) = Fe(2+)(out). In terms of biological role, transports Fe(2+) from the inside of a cell to the outside of the cell, playing a key role for maintaining systemic iron homeostasis. Transports iron from intestinal, splenic, hepatic cells, macrophages and erythrocytes into the blood to provide iron to other tissues. Controls therefore dietary iron uptake, iron recycling by macrophages and erythrocytes, and release of iron stores in hepatocytes. When iron is in excess in serum, circulating HAMP/hepcidin levels increase resulting in a degradation of SLC40A1, thus limiting the iron efflux to plasma. This chain is Ferroportin, found in Homo sapiens (Human).